Here is a 162-residue protein sequence, read N- to C-terminus: Cytochrome c-type biogenesis protein CcmE (162 aa).

The Cytoplasmic segment spans residues 1-8 (MNPRRKKR). A helical; Signal-anchor for type II membrane protein transmembrane segment spans residues 9–29 (LTLAVALIGGVAAITSLLLYA). Over 30 to 162 (LNSNLNLFYT…YSQQKAPDTK (133 aa)) the chain is Periplasmic. Residues His-131 and Tyr-135 each coordinate heme. Positions 142-162 (EAMGQKHEKLDYSQQKAPDTK) are disordered. Over residues 153 to 162 (YSQQKAPDTK) the composition is skewed to polar residues.

The protein belongs to the CcmE/CycJ family.

It localises to the cell inner membrane. Heme chaperone required for the biogenesis of c-type cytochromes. Transiently binds heme delivered by CcmC and transfers the heme to apo-cytochromes in a process facilitated by CcmF and CcmH. In Shewanella baltica (strain OS223), this protein is Cytochrome c-type biogenesis protein CcmE.